We begin with the raw amino-acid sequence, 287 residues long: MASLKSIKKRIVSVKNTGQITKAMKMVSAAKLRRAQENVVAARPYAAKLGEVLGRLSRNQDADSSPLMIKRTTGKALLIVVTSDRGLCGGFNANLCKAAERFVKERGAEFTDLSIMTIGRKGYEFLKNRQKIRKNFGTVFSNLNYQTAALLAQEVIQGYLDEEFDEVFIIYNAFRSVMSQDITLEQLLPVTPPEAADEEYAPEYIYEPSKSELLGELLPKHIEVQIFKSLLESVASEHGARMTAMDSASKNANEMIGKLTLQYNRARQAAITTELMEIISGAESIKG.

Belongs to the ATPase gamma chain family. As to quaternary structure, F-type ATPases have 2 components, CF(1) - the catalytic core - and CF(0) - the membrane proton channel. CF(1) has five subunits: alpha(3), beta(3), gamma(1), delta(1), epsilon(1). CF(0) has three main subunits: a, b and c.

Its subcellular location is the cell inner membrane. Produces ATP from ADP in the presence of a proton gradient across the membrane. The gamma chain is believed to be important in regulating ATPase activity and the flow of protons through the CF(0) complex. The sequence is that of ATP synthase gamma chain from Geotalea daltonii (strain DSM 22248 / JCM 15807 / FRC-32) (Geobacter daltonii).